We begin with the raw amino-acid sequence, 228 residues long: Urease accessory protein UreF (228 aa).

This sequence belongs to the UreF family. UreD, UreF and UreG form a complex that acts as a GTP-hydrolysis-dependent molecular chaperone, activating the urease apoprotein by helping to assemble the nickel containing metallocenter of UreC. The UreE protein probably delivers the nickel.

Its subcellular location is the cytoplasm. In terms of biological role, required for maturation of urease via the functional incorporation of the urease nickel metallocenter. This is Urease accessory protein UreF from Prochlorococcus marinus (strain MIT 9215).